A 295-amino-acid chain; its full sequence is Ribosomal protein L11 methyltransferase (295 aa).

Residues Thr-139, Gly-166, Asp-188, and Asn-231 each contribute to the S-adenosyl-L-methionine site.

Belongs to the methyltransferase superfamily. PrmA family.

The protein localises to the cytoplasm. It catalyses the reaction L-lysyl-[protein] + 3 S-adenosyl-L-methionine = N(6),N(6),N(6)-trimethyl-L-lysyl-[protein] + 3 S-adenosyl-L-homocysteine + 3 H(+). Methylates ribosomal protein L11. This Cyanothece sp. (strain PCC 7425 / ATCC 29141) protein is Ribosomal protein L11 methyltransferase.